The chain runs to 62 residues: Prokaryotic ubiquitin-like protein Pup (62 aa).

The segment at 1-36 (MEKSSQIHGSKPGDDNADEPENAAGQSQIRKQGADD) is disordered. Positions 18–56 (DEPENAAGQSQIRKQGADDLLDEIDGLLESNAEEFVRSY) are ARC ATPase binding. At Q62 the chain carries Deamidated glutamine. Residue Q62 forms an Isoglutamyl lysine isopeptide (Gln-Lys) (interchain with K-? in acceptor proteins) linkage.

Belongs to the prokaryotic ubiquitin-like protein family. In terms of assembly, strongly interacts with the proteasome-associated ATPase ARC through a hydrophobic interface; the interacting region of Pup lies in its C-terminal half. There is one Pup binding site per ARC hexamer ring. In terms of processing, is modified by deamidation of its C-terminal glutamine to glutamate by the deamidase Dop, a prerequisite to the subsequent pupylation process.

It participates in protein degradation; proteasomal Pup-dependent pathway. Protein modifier that is covalently attached to lysine residues of substrate proteins, thereby targeting them for proteasomal degradation. The tagging system is termed pupylation. In Corynebacterium kroppenstedtii (strain DSM 44385 / JCM 11950 / CIP 105744 / CCUG 35717), this protein is Prokaryotic ubiquitin-like protein Pup.